The primary structure comprises 216 residues: Ras-related protein Rab-5C (216 aa).

GTP is bound by residues serine 30, alanine 31, glycine 33, lysine 34, serine 35, serine 36, histidine 47, glutamate 48, threonine 53, and glycine 79. Serine 35 provides a ligand contact to Mg(2+). 2 short sequence motifs (switch) span residues 45–57 (QFHE…IGAA) and 78–94 (AGQE…YRGA). Threonine 53 is a Mg(2+) binding site. Residue serine 85 is modified to Phosphoserine. 5 residues coordinate GTP: asparagine 134, lysine 135, aspartate 137, alanine 165, and lysine 166. Residues 185-216 (NEPQNAAGAPGRNRGVDLQENNPASRSQCCSN) are disordered. Polar residues predominate over residues 203-216 (QENNPASRSQCCSN). Residues cysteine 213 and cysteine 214 are each lipidated (S-geranylgeranyl cysteine).

It belongs to the small GTPase superfamily. Rab family. As to quaternary structure, interacts with EEA1 and INCA1. Interacts with GDI1, GDI2, CHML and CHM; phosphorylation at Ser-85 disrupts this interaction. Mg(2+) is required as a cofactor. Phosphorylation of Ser-85 in the switch II region by LRRK2 prevents the association of RAB regulatory proteins, including CHM, CHML and RAB GDP dissociation inhibitors GDI1 and GDI2.

Its subcellular location is the cell membrane. The protein resides in the early endosome membrane. It localises to the melanosome. The enzyme catalyses GTP + H2O = GDP + phosphate + H(+). Regulated by guanine nucleotide exchange factors (GEFs) which promote the exchange of bound GDP for free GTP. Regulated by GTPase activating proteins (GAPs) which increase the GTP hydrolysis activity. Inhibited by GDP dissociation inhibitors (GDIs). Functionally, the small GTPases Rab are key regulators of intracellular membrane trafficking, from the formation of transport vesicles to their fusion with membranes. Rabs cycle between an inactive GDP-bound form and an active GTP-bound form that is able to recruit to membranes different sets of downstream effectors directly responsible for vesicle formation, movement, tethering and fusion. This is Ras-related protein Rab-5C (RAB5C) from Bos taurus (Bovine).